The sequence spans 313 residues: Dehydrogenase/reductase SDR family member 1 (313 aa).

NAD(+) is bound at residue isoleucine 19. Omega-N-methylarginine is present on arginine 21. Aspartate 64 lines the NAD(+) pocket. Serine 151 provides a ligand contact to substrate. Positions 163, 167, and 198 each coordinate NAD(+). Tyrosine 163 serves as the catalytic Proton acceptor.

This sequence belongs to the short-chain dehydrogenases/reductases (SDR) family.

It is found in the endoplasmic reticulum. The catalysed reaction is 17alpha-estradiol + NADP(+) = estrone + NADPH + H(+). The enzyme catalyses testosterone + NADP(+) = androst-4-ene-3,17-dione + NADPH + H(+). It catalyses the reaction prostaglandin E1 + NADPH + H(+) = prostaglandin F1 + NADP(+). It carries out the reaction isatin + NADPH + H(+) = 3-hydroxyindolin-2-one + NADP(+). Its function is as follows. NADPH-dependent oxidoreductase which catalyzes the reduction of some steroids (estrone, androstene-3,17-dione and cortisone) as well as prostaglandin E1, isatin and xenobiotics in vitro. May have a role in steroid and/or xenobiotic metabolism. The chain is Dehydrogenase/reductase SDR family member 1 from Mus musculus (Mouse).